A 744-amino-acid polypeptide reads, in one-letter code: Tripartite motif-containing protein 2 (744 aa).

Residue Ser10 is modified to Phosphoserine. The RING-type zinc finger occupies 23–64 (CSICLERYKNPKVLPCLHTFCERCLQNYIPAHSLTLSCPVCR). A B box-type zinc finger spans residues 113-154 (GKPLSCPNHDGNVMEFYCQSCETAMCRECTEGEHAEHPTVPL). The Zn(2+) site is built by Cys118, His121, Cys141, and His146. The stretch at 320–421 (TTNAVASETV…IRGSPFKLKV (102 aa)) is one Filamin repeat. The residue at position 371 (Thr371) is a Phosphothreonine. A phosphoserine mark is found at Ser375, Ser424, and Ser428. The segment at 432-462 (EGVKRRVKSPGSGHVKQKAVKRPASMYSTGK) is disordered. NHL repeat units follow at residues 473–516 (IFRV…FSND), 520–563 (KSRF…FSND), 564–605 (GKFK…FQPN), 609–652 (VTRF…FNQE), 656–699 (MLKF…FDGS), and 700–743 (GSFL…YRYL).

Belongs to the TRIM/RBCC family. In terms of assembly, forms homooligomers. Interacts with TRIM3; this interaction reduces TRIM2 activity. Interacts with myosin V; myosin V may not be a substrate for ubiquitination. Interacts with NEFL. Interacts with phosphorylated BCL2L11. Interacts with SIRPA. RING-type zinc finger-dependent and UBE2D1-dependent autoubiquitination. In terms of tissue distribution, highly expressed in the cerebellum, hippocampus, retina and spinal cord. In the cerebellum, strongest expression in Purkinje cells and in the deep cerebellar nuclei. In retina, high expression in the ganglionic cell layer, inner nuclear layer and inthe outer plexiform layer. Particularly high expression in the hippocampus, in pyramidal cells of CA1-CA3 hippocampal areas and ingranule cells of the dentate gyrus.

The protein localises to the cytoplasm. It catalyses the reaction S-ubiquitinyl-[E2 ubiquitin-conjugating enzyme]-L-cysteine + [acceptor protein]-L-lysine = [E2 ubiquitin-conjugating enzyme]-L-cysteine + N(6)-ubiquitinyl-[acceptor protein]-L-lysine.. It participates in protein modification; protein ubiquitination. Its function is as follows. UBE2D1-dependent E3 ubiquitin-protein ligase that mediates the ubiquitination of NEFL and of phosphorylated BCL2L11. Plays a neuroprotective function. May play a role in neuronal rapid ischemic tolerance. Plays a role in antiviral immunity and limits new world arenavirus infection independently of its ubiquitin ligase activity by decreasing virus internalization. The protein is Tripartite motif-containing protein 2 (Trim2) of Mus musculus (Mouse).